Here is a 318-residue protein sequence, read N- to C-terminus: MSLTLSELQIRTLKQTLESSKIPFKSEVRLDILSSFKIGGICPVVVEPENSNQVLETLFIFYKSEIPWKILGGGSNLLISDHPDNFVTLRLSGKFKEFEYLEGGKFRIGSATNTTPTFRQISQLGYTGAEFLSTIPGWTGGAVIQNAGCYGGELFDLIQTVEFLRNNEIFVRSPSEIKHGYRFTEFLNEKDSIILGIEILLKEGNLEEIQTSLKDKRDRRNSSQPENKKSAGSVFKNPKIFLENGKEIKAWELIDQAGLRGQIKGGAQISPEHCNFIVNVGAATAADVNYLVELILDKVFQTTGIRLNREIEYFGDIP.

The FAD-binding PCMH-type domain occupies 38-204 (IGGICPVVVE…LGIEILLKEG (167 aa)). Residue arginine 182 is part of the active site. The disordered stretch occupies residues 212–232 (SLKDKRDRRNSSQPENKKSAG). The segment covering 213–229 (LKDKRDRRNSSQPENKK) has biased composition (basic and acidic residues). The active-site Proton donor is serine 233. The active site involves glutamate 310.

It belongs to the MurB family. It depends on FAD as a cofactor.

The protein resides in the cytoplasm. It catalyses the reaction UDP-N-acetyl-alpha-D-muramate + NADP(+) = UDP-N-acetyl-3-O-(1-carboxyvinyl)-alpha-D-glucosamine + NADPH + H(+). The protein operates within cell wall biogenesis; peptidoglycan biosynthesis. In terms of biological role, cell wall formation. The chain is UDP-N-acetylenolpyruvoylglucosamine reductase from Leptospira borgpetersenii serovar Hardjo-bovis (strain L550).